The chain runs to 148 residues: Oleosin 16 kDa (148 aa).

Residues 1–21 (MADQHRGVIGGGGYGDRGGQE) are disordered. Ala-2 is subject to N-acetylalanine. The interval 2–34 (ADQHRGVIGGGGYGDRGGQEQQEKQPFMMTALK) is polar. Positions 8–17 (VIGGGGYGDR) are enriched in gly residues. Positions 35–106 (TVTAATAGGS…AALSVFSWMY (72 aa)) are hydrophobic. Helical transmembrane passes span 43–63 (GSMLVLSGLILAGTVIALTVA), 66–86 (VLVIFSPVLVPAAIALALMAA), and 87–107 (GFVTSGGLGVAALSVFSWMYK).

Belongs to the oleosin family.

Its subcellular location is the lipid droplet. It localises to the membrane. In terms of biological role, may have a structural role to stabilize the lipid body during desiccation of the seed by preventing coalescence of the oil. Probably interacts with both lipid and phospholipid moieties of lipid bodies. May also provide recognition signals for specific lipase anchorage in lipolysis during seedling growth. The protein is Oleosin 16 kDa (OLE16) of Oryza sativa subsp. japonica (Rice).